The primary structure comprises 607 residues: Albumin B (607 aa).

The signal sequence occupies residues 1-18 (MKWITLICLLISSSFIES). Positions 19–24 (RILFKR) are excised as a propeptide. Albumin domains lie at 22-209 (FKRD…KQLM), 210-402 (KQSH…RFMN), and 403-600 (EAKE…VLIE). Position 30 (H30) interacts with Cu cation. Cystine bridges form between C80/C88, C101/C117, C116/C127, C147/C192, C191/C200, C223/C269, C268/C276, C288/C302, C301/C312, C339/C384, C383/C392, C415/C461, C460/C471, C484/C500, C499/C510, C537/C582, and C581/C590.

The protein belongs to the ALB/AFP/VDB family. In terms of tissue distribution, plasma.

It localises to the secreted. Its function is as follows. Serum albumin, the main protein of plasma, has a good binding capacity for water, Ca(2+), Na(+), K(+), fatty acids, hormones, bilirubin and drugs. Its main function is the regulation of the colloidal osmotic pressure of blood. The sequence is that of Albumin B (alb-b) from Xenopus laevis (African clawed frog).